We begin with the raw amino-acid sequence, 403 residues long: Na(+)-translocating NADH-quinone reductase subunit B (403 aa).

A run of 9 helical transmembrane segments spans residues 56-76 (MMIT…WNTG), 121-141 (AYFL…EVLF), 163-183 (ILPP…GVVI), 220-240 (WTAV…SGGI), 265-285 (TSTL…IASW), 287-307 (IVSG…LIGS), 312-332 (MFAM…GMFF), 348-368 (WIFG…NPAF), and 371-391 (GMML…HFVV). Thr-230 bears the FMN phosphoryl threonine mark.

The protein belongs to the NqrB/RnfD family. Composed of six subunits; NqrA, NqrB, NqrC, NqrD, NqrE and NqrF. FMN is required as a cofactor.

The protein localises to the cell inner membrane. It carries out the reaction a ubiquinone + n Na(+)(in) + NADH + H(+) = a ubiquinol + n Na(+)(out) + NAD(+). NQR complex catalyzes the reduction of ubiquinone-1 to ubiquinol by two successive reactions, coupled with the transport of Na(+) ions from the cytoplasm to the periplasm. NqrA to NqrE are probably involved in the second step, the conversion of ubisemiquinone to ubiquinol. This Ectopseudomonas mendocina (strain ymp) (Pseudomonas mendocina) protein is Na(+)-translocating NADH-quinone reductase subunit B.